We begin with the raw amino-acid sequence, 514 residues long: Type-2 serine--tRNA ligase (514 aa).

Ala313 lines the L-serine pocket. Cys315 is a Zn(2+) binding site. Residue Arg344 coordinates L-serine. Residues 344–346 (RWE) and 355–356 (RV) contribute to the ATP site. 361-363 (RGE) serves as a coordination point for L-serine. Residues Glu363 and Cys470 each coordinate Zn(2+). Arg477 lines the ATP pocket.

Belongs to the class-II aminoacyl-tRNA synthetase family. Type-2 seryl-tRNA synthetase subfamily. As to quaternary structure, homodimer. Requires Zn(2+) as cofactor.

It localises to the cytoplasm. It catalyses the reaction tRNA(Ser) + L-serine + ATP = L-seryl-tRNA(Ser) + AMP + diphosphate + H(+). It carries out the reaction tRNA(Sec) + L-serine + ATP = L-seryl-tRNA(Sec) + AMP + diphosphate + H(+). The protein operates within aminoacyl-tRNA biosynthesis; selenocysteinyl-tRNA(Sec) biosynthesis; L-seryl-tRNA(Sec) from L-serine and tRNA(Sec): step 1/1. In terms of biological role, catalyzes the attachment of serine to tRNA(Ser). Is also able to aminoacylate tRNA(Sec) with serine, to form the misacylated tRNA L-seryl-tRNA(Sec), which will be further converted into selenocysteinyl-tRNA(Sec). The protein is Type-2 serine--tRNA ligase of Methanococcus maripaludis (strain C6 / ATCC BAA-1332).